A 156-amino-acid chain; its full sequence is Large ribosomal subunit protein eL24 (156 aa).

Residues 110–129 are compositionally biased toward basic and acidic residues; that stretch reads KESKAKKQETQAAKKAEKAK. The tract at residues 110–156 is disordered; it reads KESKAKKQETQAAKKAEKAKNAANPKARVTSKQGAKGAPVKVAAKSR. Residues 130–156 are compositionally biased toward low complexity; it reads NAANPKARVTSKQGAKGAPVKVAAKSR.

This sequence belongs to the eukaryotic ribosomal protein eL24 family. In terms of assembly, component of the large ribosomal subunit (LSU). Mature N.crassa ribosomes consist of a small (40S) and a large (60S) subunit. The 40S small subunit contains 1 molecule of ribosomal RNA (18S rRNA) and at least 32 different proteins. The large 60S subunit contains 3 rRNA molecules (26S, 5.8S and 5S rRNA) and at least 42 different proteins.

The protein localises to the cytoplasm. Functionally, component of the ribosome, a large ribonucleoprotein complex responsible for the synthesis of proteins in the cell. The small ribosomal subunit (SSU) binds messenger RNAs (mRNAs) and translates the encoded message by selecting cognate aminoacyl-transfer RNA (tRNA) molecules. The large subunit (LSU) contains the ribosomal catalytic site termed the peptidyl transferase center (PTC), which catalyzes the formation of peptide bonds, thereby polymerizing the amino acids delivered by tRNAs into a polypeptide chain. The nascent polypeptides leave the ribosome through a tunnel in the LSU and interact with protein factors that function in enzymatic processing, targeting, and the membrane insertion of nascent chains at the exit of the ribosomal tunnel. The protein is Large ribosomal subunit protein eL24 (rpl-24) of Neurospora crassa (strain ATCC 24698 / 74-OR23-1A / CBS 708.71 / DSM 1257 / FGSC 987).